The following is a 443-amino-acid chain: EGF-containing fibulin-like extracellular matrix protein 2 (443 aa).

Positions 1–23 are cleaved as a signal peptide; that stretch reads MLPCASCLPGSLLLWALLLLLLG. The EGF-like 1; atypical domain occupies 36–81; the sequence is YTECTDGYEWDPDSQHCRDVNECLTIPEACKGEMKCINHYGGYLCL. Cystine bridges form between Cys58–Cys121, Cys65–Cys80, Cys71–Cys109, Cys127–Cys140, Cys134–Cys149, Cys151–Cys162, Cys168–Cys177, Cys173–Cys186, Cys188–Cys201, Cys207–Cys217, Cys213–Cys226, Cys228–Cys241, Cys247–Cys258, Cys254–Cys267, Cys269–Cys281, Cys287–Cys300, Cys294–Cys309, and Cys315–Cys327. In terms of domain architecture, EGF-like 2; calcium-binding spans 123–163; sequence DVDECAQALHDCRPSQDCHNLPGSYQCTCPDGYRKIGPECV. The EGF-like 3; calcium-binding domain occupies 164–202; it reads DIDECRYRYCQHRCVNLPGSFRCQCEPGFQLGPNNRSCV. Asn198 carries N-linked (GlcNAc...) asparagine glycosylation. The region spanning 203–242 is the EGF-like 4; calcium-binding domain; the sequence is DVNECDMGAPCEQRCFNSYGTFLCRCHQGYELHRDGFSCS. An EGF-like 5; calcium-binding domain is found at 243–282; it reads DIDECSYSSYLCQYRCINEPGRFSCHCPQGYQLLATRLCQ. The EGF-like 6; calcium-binding domain maps to 283 to 328; the sequence is DIDECESGAHQCSEAQTCVNFHGGYRCVDTNRCVEPYIQVSENRCL. An N-linked (GlcNAc...) asparagine glycan is attached at Asn394.

The protein belongs to the fibulin family. As to quaternary structure, homodimer; disulfide-linked. Multimer; allows heparin binding. Monomer. Interacts with FBN1 (via N-terminal domain); this interaction inhibits EFEMP2 binding to LOX and ELN. Interacts with LOX (via propeptide); this interaction is strong and facilitates formation of ternary complexes with ELN during elastic fiber assembly; this interaction limits interaction of EFEMP2 with FBLN5. Interacts with PITX2. Interacts with ELN with moderate affinity; this interaction regulates ELN self-assembly maturation stage. Interacts with FBLN5 with moderate affinity. Interacts with LOXL1 (via propeptide), LTBP1 and TGFB1 stronger than with LOXL2 and LTBP3. Interacts with PCOLCE. Interacts with collagen type IV trimer (COL4A1-COL4A1-COL4A2), NID2 and moderately with COL15A1-derived endostatin. Interacts with EMILIN1; this interaction promotes the incorporation of EFEMP2 into the extracellular matrix. Interacts with LTBP4; the LTBP4 long form (LTBP4L) has a stronger binding affinity than the LTBP4 short form and the LTBP4 long form promotes fibrillar deposition of EFEMP2. Post-translationally, N-glycosylated; contains mostly complex-type glycans. Not O-glycosylated. In terms of processing, cleaved by ELANE; produces a 50-55 kDa fragment. Cleaved by MMP2 and MMP9; produces several fragments.

The protein resides in the secreted. The protein localises to the extracellular space. It localises to the extracellular matrix. It is found in the basement membrane. Its function is as follows. Plays a crucial role in elastic fiber formation in tissue, and in the formation of ultrastructural connections between elastic laminae and smooth muscle cells in the aorta, therefore participates in terminal differentiation and maturation of smooth muscle cell (SMC) and in the mechanical properties and wall integrity maintenance of the aorta. In addition, is involved in the control of collagen fibril assembly in tissue throught proteolytic activation of LOX leading to cross- linking of collagen and elastin. Also promotes ELN coacervation and participates in the deposition of ELN coacervates on to microfibrils but also regulates ELN cross- linking through LOX interaction. Moreover adheres to the cells through heparin binding in a calcium-dependent manner and regulates vascularlar smooth muscle cells proliferation through angiotensin signaling. The chain is EGF-containing fibulin-like extracellular matrix protein 2 from Homo sapiens (Human).